We begin with the raw amino-acid sequence, 249 residues long: Metallo-beta-lactamase type 2 (249 aa).

The first 22 residues, 1–22, serve as a signal peptide directing secretion; that stretch reads MLKKIKISLILALGLTSLQAFG. Residues His98, His100, Asp102, His161, and Cys180 each coordinate Zn(2+). Lys183 contacts substrate. His222 serves as a coordination point for Zn(2+).

It belongs to the metallo-beta-lactamase superfamily. Class-B beta-lactamase family. Monomer. Zn(2+) is required as a cofactor.

The protein resides in the periplasm. The enzyme catalyses a beta-lactam + H2O = a substituted beta-amino acid. In terms of biological role, confers resistance to the different beta-lactams antibiotics (penicillin, cephalosporin and carbapenem) via the hydrolysis of the beta-lactam ring. The protein is Metallo-beta-lactamase type 2 (blaB2) of Elizabethkingia meningoseptica (Chryseobacterium meningosepticum).